A 230-amino-acid polypeptide reads, in one-letter code: Sugar fermentation stimulation protein homolog (230 aa).

This sequence belongs to the SfsA family.

The polypeptide is Sugar fermentation stimulation protein homolog (Clostridium botulinum (strain 657 / Type Ba4)).